The primary structure comprises 473 residues: Allene oxide synthase CYP74A2 (473 aa).

Residues Lys88, His119, and Lys123 each contribute to the heme b site. The (13S)-hydroperoxy-(9Z,11E)-octadecadienoate site is built by Ser199 and Lys282. 2 residues coordinate heme b: Lys424 and Cys426.

The protein belongs to the cytochrome P450 family. Requires heme b as cofactor.

It carries out the reaction (13S)-hydroperoxy-(9Z,11E,15Z)-octadecatrienoate = (9Z,13S,15Z)-12,13-epoxyoctadeca-9,11,15-trienoate + H2O. It catalyses the reaction (13S)-hydroperoxy-(9Z,11E)-octadecadienoate = (9Z,13S)-12,13-epoxyoctadeca-9,11-dienoate + H2O. The protein operates within lipid metabolism; oxylipin biosynthesis. In terms of biological role, cytochrome P450 enzyme involved in the biosynthesis of oxylipin jasmonates, important phytohormones acting as growth regulators and signaling molecules for plant defense. Functions as an allene oxide synthase that converts hydroperoxy fatty acids to unstable allene epoxides. Catalyzes the dehydration of 13-HPOTE ((13S)-hydroperoxy-(9Z,11E,15Z)-octadecatrienoate). Also catalyzes the dehydration of 13-HPODE ((13S)-hydroperoxy-(9Z,11E)-octadecadienoate). This Parthenium argentatum (Guayule rubber plant) protein is Allene oxide synthase CYP74A2.